The chain runs to 229 residues: Heptahelical transmembrane protein ADIPOR2 (229 aa).

The Cytoplasmic segment spans residues 1 to 4 (MQGA). A helical membrane pass occupies residues 5-25 (ASHDAAAAAAAAAVLGGGHGV). Topologically, residues 26 to 30 (PRWPR) are extracellular. Residues 31–51 (MVFLVGAMTCLAISATAHLLA) traverse the membrane as a helical segment. Topologically, residues 52 to 66 (CHSRRASVVFWQLDY) are cytoplasmic. The chain crosses the membrane as a helical span at residues 67–87 (AGISAMIVASFVPPVYYAFLC). Over 88-92 (HRPAR) the chain is Extracellular. Residues 93–113 (VAYLSAISALGALVVGALLSP) traverse the membrane as a helical segment. Topologically, residues 114 to 124 (PCSSPRFRRLR) are cytoplasmic. Residues 125–145 (AALFLAMGLSGVVPALHALWL) traverse the membrane as a helical segment. Residues 146–153 (NWGHAACY) are Extracellular-facing. A helical membrane pass occupies residues 154 to 174 (LALSLEVAMGLAYAAGAWFYV). Topologically, residues 175–194 (SRVPEKWRPGVFDVVGHSHQ) are cytoplasmic. The chain crosses the membrane as a helical span at residues 195 to 215 (IFHVLVLVGAVTHYVAVDVLL). Topologically, residues 216–229 (NWRETVAAACSATS) are extracellular.

Belongs to the ADIPOR family.

It is found in the membrane. May play a role in abiotic stress response. This chain is Heptahelical transmembrane protein ADIPOR2 (ADIPOR2), found in Oryza sativa subsp. japonica (Rice).